A 196-amino-acid polypeptide reads, in one-letter code: 3-isopropylmalate dehydratase small subunit (196 aa).

Belongs to the LeuD family. LeuD type 1 subfamily. As to quaternary structure, heterodimer of LeuC and LeuD.

It catalyses the reaction (2R,3S)-3-isopropylmalate = (2S)-2-isopropylmalate. The protein operates within amino-acid biosynthesis; L-leucine biosynthesis; L-leucine from 3-methyl-2-oxobutanoate: step 2/4. Catalyzes the isomerization between 2-isopropylmalate and 3-isopropylmalate, via the formation of 2-isopropylmaleate. In Streptococcus thermophilus (strain CNRZ 1066), this protein is 3-isopropylmalate dehydratase small subunit.